Consider the following 304-residue polypeptide: Recombination-associated protein RdgC (304 aa).

It belongs to the RdgC family.

It localises to the cytoplasm. Its subcellular location is the nucleoid. Functionally, may be involved in recombination. The sequence is that of Recombination-associated protein RdgC from Shewanella sp. (strain MR-4).